Here is a 456-residue protein sequence, read N- to C-terminus: Protein FAM124B (456 aa).

The tract at residues 262–313 (NGCLRGDTHPQDSSLNSVSTQRTLEPRSRRRSRSRRFKVHSLELPQPSGSWE) is disordered. Residues 272–284 (QDSSLNSVSTQRT) are compositionally biased toward polar residues. Positions 289–300 (SRRRSRSRRFKV) are enriched in basic residues.

Belongs to the FAM124 family. In terms of assembly, interacts with CHD7 and CHD8. In terms of tissue distribution, expressed strongly in lung, at slightly lower levels in heart, kidney, brain and testis, and weakly in liver (at protein level). In brain, highly expressed in cortex, hippocampus, dentate gyrus, caudate putamen and cerebellum (at protein level).

Its subcellular location is the nucleus. The sequence is that of Protein FAM124B (Fam124b) from Mus musculus (Mouse).